We begin with the raw amino-acid sequence, 62 residues long: Chromatin protein Cren7 2 (62 aa).

It belongs to the Cren7 family. Monomer. Methylated at multiple sites, to varying extents.

It localises to the chromosome. The protein localises to the cytoplasm. Its function is as follows. A chromatin protein, binds double-stranded DNA without sequence specificity. Constrains negative DNA supercoils. The sequence is that of Chromatin protein Cren7 2 (cren7-2) from Hyperthermus butylicus (strain DSM 5456 / JCM 9403 / PLM1-5).